The following is a 723-amino-acid chain: Probable alpha-fucosidase A (723 aa).

An N-terminal signal peptide occupies residues 1 to 15; sequence MRSLVLLGMSSLATA. N-linked (GlcNAc...) asparagine glycans are attached at residues N77, N98, N117, N171, N194, N243, N334, N558, N566, and N595.

Belongs to the glycosyl hydrolase 95 family.

Its subcellular location is the secreted. It carries out the reaction an alpha-L-fucoside + H2O = L-fucose + an alcohol. Functionally, alpha-fucosidase involved in degradation of fucosylated xyloglucans. Hydrolyzes alpha-1,2-linked fucose. The chain is Probable alpha-fucosidase A (afcA) from Aspergillus oryzae (strain ATCC 42149 / RIB 40) (Yellow koji mold).